The primary structure comprises 125 residues: MASIASSVAVRLGLTQVLPNKNFSSPRSTRLVVRAAEEAAAAPAAASPEGEAPKAAAKPPPIGPKRGSKVRIMRKESYWYKGVGSVVAVDQDPKTRYPVVVRFNKVNYANVSTNNYALDEIQEVA.

The N-terminal 34 residues, 1 to 34, are a transit peptide targeting the chloroplast; the sequence is MASIASSVAVRLGLTQVLPNKNFSSPRSTRLVVR. Positions 42–57 are enriched in low complexity; the sequence is APAAASPEGEAPKAAA. The segment at 42-68 is disordered; that stretch reads APAAASPEGEAPKAAAKPPPIGPKRGS.

This sequence belongs to the PsaE family.

Its subcellular location is the plastid. It localises to the chloroplast thylakoid membrane. In terms of biological role, stabilizes the interaction between PsaC and the PSI core, assists the docking of the ferredoxin to PSI and interacts with ferredoxin-NADP oxidoreductase. This chain is Photosystem I reaction center subunit IV, chloroplastic (PSAE-1), found in Spinacia oleracea (Spinach).